Consider the following 300-residue polypeptide: MNQSYGRLVSRAAIAATAMASLLLLIKIFAWWYTGSVSILAALVDSLVDIGASLTNLLVVRYSLQPADDNHSFGHGKAESLAALAQSMFISGSALFLFLTGIQHLISPTPMNDPGVGIIVTIVALVCTILLVSFQRWVVRRTQSQAVRADMLHYQSDVMMNGAILLALALSWYGWHSADALFALGIGIYILYSALRMGYEAVQSLLDRALPDDERQEIIDIVTSWPGVSGAHDLRTRQSGPTRFIQIHLEMEDSLPLVQAHMVADQVEQAILRRFPGSDVIIHQDPCSVVPREGKRFELS.

Transmembrane regions (helical) follow at residues Ala12 to Trp32, Ile39 to Val59, Ala82 to Ile102, Pro114 to Phe134, Met151 to Ser171, and Trp172 to Tyr192. Positions 45 and 49 each coordinate Zn(2+). His153 and Asp157 together coordinate Zn(2+).

This sequence belongs to the cation diffusion facilitator (CDF) transporter (TC 2.A.4) family. FieF subfamily. As to quaternary structure, homodimer.

Its subcellular location is the cell inner membrane. The enzyme catalyses Zn(2+)(in) + H(+)(out) = Zn(2+)(out) + H(+)(in). It carries out the reaction Cd(2+)(in) + H(+)(out) = Cd(2+)(out) + H(+)(in). It catalyses the reaction Fe(2+)(in) + H(+)(out) = Fe(2+)(out) + H(+)(in). Functionally, divalent metal cation transporter which exports Zn(2+), Cd(2+) and possibly Fe(2+). May be involved in zinc and iron detoxification by efflux. This chain is Cation-efflux pump FieF, found in Escherichia fergusonii (strain ATCC 35469 / DSM 13698 / CCUG 18766 / IAM 14443 / JCM 21226 / LMG 7866 / NBRC 102419 / NCTC 12128 / CDC 0568-73).